The following is a 277-amino-acid chain: 3-methyl-2-oxobutanoate hydroxymethyltransferase (277 aa).

Residues Asp43 and Asp82 each contribute to the Mg(2+) site. 3-methyl-2-oxobutanoate-binding positions include 43–44 (DS), Asp82, and Lys112. A Mg(2+)-binding site is contributed by Glu114. The active-site Proton acceptor is Glu181.

The protein belongs to the PanB family. In terms of assembly, homodecamer; pentamer of dimers. The cofactor is Mg(2+).

The protein localises to the cytoplasm. It carries out the reaction 3-methyl-2-oxobutanoate + (6R)-5,10-methylene-5,6,7,8-tetrahydrofolate + H2O = 2-dehydropantoate + (6S)-5,6,7,8-tetrahydrofolate. It functions in the pathway cofactor biosynthesis; (R)-pantothenate biosynthesis; (R)-pantoate from 3-methyl-2-oxobutanoate: step 1/2. Functionally, catalyzes the reversible reaction in which hydroxymethyl group from 5,10-methylenetetrahydrofolate is transferred onto alpha-ketoisovalerate to form ketopantoate. The polypeptide is 3-methyl-2-oxobutanoate hydroxymethyltransferase (Exiguobacterium sp. (strain ATCC BAA-1283 / AT1b)).